The following is a 346-amino-acid chain: tRNA N6-adenosine threonylcarbamoyltransferase (346 aa).

The Fe cation site is built by histidine 111 and histidine 115. Residues 134-138, aspartate 167, glycine 180, and asparagine 279 each bind substrate; that span reads LVSGG. Position 307 (aspartate 307) interacts with Fe cation.

The protein belongs to the KAE1 / TsaD family. Fe(2+) serves as cofactor.

The protein resides in the cytoplasm. It catalyses the reaction L-threonylcarbamoyladenylate + adenosine(37) in tRNA = N(6)-L-threonylcarbamoyladenosine(37) in tRNA + AMP + H(+). Functionally, required for the formation of a threonylcarbamoyl group on adenosine at position 37 (t(6)A37) in tRNAs that read codons beginning with adenine. Is involved in the transfer of the threonylcarbamoyl moiety of threonylcarbamoyl-AMP (TC-AMP) to the N6 group of A37, together with TsaE and TsaB. TsaD likely plays a direct catalytic role in this reaction. This Burkholderia thailandensis (strain ATCC 700388 / DSM 13276 / CCUG 48851 / CIP 106301 / E264) protein is tRNA N6-adenosine threonylcarbamoyltransferase.